Reading from the N-terminus, the 376-residue chain is D-alanine--D-alanine ligase (376 aa).

An ATP-grasp domain is found at 155 to 361; it reads KIIFEKAGIP…YPELIEKLID (207 aa). 188–243 is an ATP binding site; it reads EEKFSYPVFVKPSNAGSSVGVSKAHDKNELKEALIYAARYDRKVLIEEFINGREVE. Residues Asp314, Glu328, and Asn330 each contribute to the Mg(2+) site.

Belongs to the D-alanine--D-alanine ligase family. Mg(2+) is required as a cofactor. The cofactor is Mn(2+).

It localises to the cytoplasm. The catalysed reaction is 2 D-alanine + ATP = D-alanyl-D-alanine + ADP + phosphate + H(+). Its pathway is cell wall biogenesis; peptidoglycan biosynthesis. Functionally, cell wall formation. The sequence is that of D-alanine--D-alanine ligase from Acetivibrio thermocellus (strain ATCC 27405 / DSM 1237 / JCM 9322 / NBRC 103400 / NCIMB 10682 / NRRL B-4536 / VPI 7372) (Clostridium thermocellum).